The following is a 294-amino-acid chain: ATP phosphoribosyltransferase (294 aa).

This sequence belongs to the ATP phosphoribosyltransferase family. Long subfamily. The cofactor is Mg(2+).

The protein resides in the cytoplasm. It carries out the reaction 1-(5-phospho-beta-D-ribosyl)-ATP + diphosphate = 5-phospho-alpha-D-ribose 1-diphosphate + ATP. Its pathway is amino-acid biosynthesis; L-histidine biosynthesis; L-histidine from 5-phospho-alpha-D-ribose 1-diphosphate: step 1/9. With respect to regulation, feedback inhibited by histidine. Its function is as follows. Catalyzes the condensation of ATP and 5-phosphoribose 1-diphosphate to form N'-(5'-phosphoribosyl)-ATP (PR-ATP). Has a crucial role in the pathway because the rate of histidine biosynthesis seems to be controlled primarily by regulation of HisG enzymatic activity. In Chlorobium luteolum (strain DSM 273 / BCRC 81028 / 2530) (Pelodictyon luteolum), this protein is ATP phosphoribosyltransferase.